The following is a 387-amino-acid chain: Large ribosomal subunit protein uL3 (387 aa).

Belongs to the universal ribosomal protein uL3 family.

The protein localises to the cytoplasm. The chain is Large ribosomal subunit protein uL3 (RPL3) from Candida glabrata (strain ATCC 2001 / BCRC 20586 / JCM 3761 / NBRC 0622 / NRRL Y-65 / CBS 138) (Yeast).